The following is a 421-amino-acid chain: Aspartokinase (421 aa).

Residue 7-10 (KYGG) participates in ATP binding. 25 to 30 (RIVETK) provides a ligand contact to substrate. Ser-41 is an ATP binding site. Substrate-binding positions include 45–49 (DTTDD), Glu-74, 125–126 (LD), 151–154 (RGGS), and Ser-154. ATP contacts are provided by residues 174–175 (TD), 180–185 (FTADPR), and Lys-210. 2 consecutive ACT domains span residues 267–348 (VTVV…GKVS) and 349–421 (LIGA…GTGR). Substrate-binding positions include Asp-274, 274–279 (DVPGYA), 292–294 (NID), Gln-298, 360–361 (VT), 374–375 (NI), and 381–382 (SE).

It belongs to the aspartokinase family. Heterotetramer consisting of 2 isoforms Alpha (catalytic and regulation) and of a homodimer of 2 isoforms Beta (regulation).

It carries out the reaction L-aspartate + ATP = 4-phospho-L-aspartate + ADP. It participates in amino-acid biosynthesis; L-lysine biosynthesis via DAP pathway; (S)-tetrahydrodipicolinate from L-aspartate: step 1/4. Its pathway is amino-acid biosynthesis; L-methionine biosynthesis via de novo pathway; L-homoserine from L-aspartate: step 1/3. The protein operates within amino-acid biosynthesis; L-threonine biosynthesis; L-threonine from L-aspartate: step 1/5. Feedback inhibition by lysine and threonine. Its function is as follows. Catalyzes the phosphorylation of the beta-carboxyl group of aspartic acid with ATP to yield 4-phospho-L-aspartate, which is involved in the branched biosynthetic pathway leading to the biosynthesis of amino acids lysine, threonine, isoleucine and methionine. In Mycolicibacterium smegmatis (Mycobacterium smegmatis), this protein is Aspartokinase (ask).